A 241-amino-acid chain; its full sequence is MSQVKYNRIILKISGEALAGDKGNGINPTVIGHLANEIKSVHDLGVEIGIVCGGGNMWRGETGAKLGMERAQADYMGMLATIMNGLALQDGLEKVGVPTRMQTSIEMRQIAEPYIRRRALRHLEKGRVVIFGGGTGNPYFSTDTTAALRAAEIGADVILMAKNGVDGIYSADPKTDPSATKFAELTQLDLISKDLKVMDRTASSLSMDTEIPLIVFNVNTPGNIKKVVMGENIGTVIRGDK.

12–15 (KISG) serves as a coordination point for ATP. The involved in allosteric activation by GTP stretch occupies residues 20–25 (GDKGNG). Residue Gly54 participates in UMP binding. Gly55 and Arg59 together coordinate ATP. UMP contacts are provided by residues Asp74 and 135 to 142 (TGNPYFST). 3 residues coordinate ATP: Asn163, Tyr169, and Asp172.

Belongs to the UMP kinase family. In terms of assembly, homohexamer.

It is found in the cytoplasm. It catalyses the reaction UMP + ATP = UDP + ADP. It functions in the pathway pyrimidine metabolism; CTP biosynthesis via de novo pathway; UDP from UMP (UMPK route): step 1/1. With respect to regulation, allosterically activated by GTP. Inhibited by UTP. Functionally, catalyzes the reversible phosphorylation of UMP to UDP. In Lactobacillus acidophilus (strain ATCC 700396 / NCK56 / N2 / NCFM), this protein is Uridylate kinase.